Consider the following 36-residue polypeptide: MDNQHKKIKGYRDLSQEEIDMMNRVKELGSQFEKLI.

It belongs to the Acb2 family.

Functionally, a naturally occurring inactive form of this protein. Upon mutation by a single nucleotide change (changes the stop codon to Gln) inhibits CBASS immunity; most closely related viruses encode a long version of this protein. The long (mutated) version antagonizes the effector protein of host type II-A CBASS immunity by binding the second messenger 3',3'-cyclic GMP-AMP (cGAMP) and sequestering it (thus preventing host CapV activation) without degrading the cyclic nucleotide. The mutated version also antagonizes the effector protein of P.aeruginosa type I-A and type I-B CBASS systems. The chain is Inactive anti-CBASS 2 protein from Pseudomonas phage PaMx41.